A 196-amino-acid polypeptide reads, in one-letter code: HTH-type transcriptional regulator BetI (196 aa).

In terms of domain architecture, HTH tetR-type spans 8 to 68; the sequence is EVRRAQLIDA…ATMRHILRDL (61 aa). The H-T-H motif DNA-binding region spans 31-50; sequence TLASVAQRANISTGIVSHYF.

The protein operates within amine and polyamine biosynthesis; betaine biosynthesis via choline pathway [regulation]. Functionally, repressor involved in the biosynthesis of the osmoprotectant glycine betaine. It represses transcription of the choline transporter BetT and the genes of BetAB involved in the synthesis of glycine betaine. The polypeptide is HTH-type transcriptional regulator BetI (Paraburkholderia phymatum (strain DSM 17167 / CIP 108236 / LMG 21445 / STM815) (Burkholderia phymatum)).